A 396-amino-acid polypeptide reads, in one-letter code: MRTLVFEPFSGASGDMILAGLIDLGADKGEIVEVIQASVDVSVTIEDITKCGIRATDVNIHTKDSARIRSFGELIDIIKDANLPEEVEKNAIAVFRIIGDAEAKVHGMSLEQLHFHEVGQDDALADVIGSCYAIHRMKVENILCTPVNVGGGSVRTAHGTLPVPVPATTEILSGSGLEVHSNGDRELLTPTGAALLTYFANPSDQLPTGKILTTGYGAGDAETDMPNVLRTMLMETTGNLSRDHMEVLETNVDDVTGEVLGNLFETLMKEGAKDVTITPATMKKGRTGHIIHVIAHPENSERIARELIRQTGTLGVRILPTKHRFIAERKMEKVNIIIGKQTFQVTVKIAHDRSDEVLHISAEFEDCRRISQECGLPLKEVIRRAEEKAWNNILKK.

This sequence belongs to the LarC family.

This is Putative nickel insertion protein from Methanococcoides burtonii (strain DSM 6242 / NBRC 107633 / OCM 468 / ACE-M).